The chain runs to 221 residues: uncharacterized protein (221 aa).

Helical transmembrane passes span 30–50, 62–82, 144–164, and 179–199; these read FGIF…LPLA, AGVV…LYWI, VWVF…VYVY, and ILDQ…LLYL.

The protein belongs to the DedA family.

It localises to the cell membrane. This is an uncharacterized protein from Bacillus subtilis (strain 168).